The sequence spans 215 residues: Probable transaldolase (215 aa).

Catalysis depends on Lys-83, which acts as the Schiff-base intermediate with substrate.

It belongs to the transaldolase family. Type 3B subfamily.

The protein localises to the cytoplasm. The enzyme catalyses D-sedoheptulose 7-phosphate + D-glyceraldehyde 3-phosphate = D-erythrose 4-phosphate + beta-D-fructose 6-phosphate. Its pathway is carbohydrate degradation; pentose phosphate pathway; D-glyceraldehyde 3-phosphate and beta-D-fructose 6-phosphate from D-ribose 5-phosphate and D-xylulose 5-phosphate (non-oxidative stage): step 2/3. Transaldolase is important for the balance of metabolites in the pentose-phosphate pathway. This chain is Probable transaldolase, found in Clostridium perfringens (strain SM101 / Type A).